Here is a 284-residue protein sequence, read N- to C-terminus: Bifunctional protein FolD (284 aa).

NADP(+)-binding positions include 166 to 168 (GRS) and Ser-191.

It belongs to the tetrahydrofolate dehydrogenase/cyclohydrolase family. Homodimer.

The enzyme catalyses (6R)-5,10-methylene-5,6,7,8-tetrahydrofolate + NADP(+) = (6R)-5,10-methenyltetrahydrofolate + NADPH. It catalyses the reaction (6R)-5,10-methenyltetrahydrofolate + H2O = (6R)-10-formyltetrahydrofolate + H(+). It participates in one-carbon metabolism; tetrahydrofolate interconversion. In terms of biological role, catalyzes the oxidation of 5,10-methylenetetrahydrofolate to 5,10-methenyltetrahydrofolate and then the hydrolysis of 5,10-methenyltetrahydrofolate to 10-formyltetrahydrofolate. The polypeptide is Bifunctional protein FolD (Leptospira borgpetersenii serovar Hardjo-bovis (strain JB197)).